A 252-amino-acid chain; its full sequence is MERLLIVNADDFGLSKGQNYGIIEACRNGIVTSTTALVNGQAIDHAVQLSRDEPSLAIGMHFVLTMGKPLTAMPGLTRDGVLGKWIWQLAEEDALPLEEITQELASQYLRFIELFGRKPTHLDSHHHVHMFPQIFPIVARFAAEEGIALRIDRQPLSNAGDLPANLRSSQGFSSAFYGEEISEALFLQVLDDASHRGDPSLEVMCHPAFIDNTIRQSAYCFPRLTELEVLTSASLKYAIAERGYRLGSYLDV.

Mg(2+) contacts are provided by H61 and H125.

The protein belongs to the YdjC deacetylase family. ChbG subfamily. In terms of assembly, homodimer. The cofactor is Mg(2+).

The protein localises to the cytoplasm. The enzyme catalyses N,N'-diacetylchitobiose + H2O = N-acetyl-beta-D-glucosaminyl-(1-&gt;4)-D-glucosamine + acetate. It carries out the reaction diacetylchitobiose-6'-phosphate + H2O = N'-monoacetylchitobiose-6'-phosphate + acetate. The protein operates within glycan degradation; chitin degradation. Functionally, involved in the degradation of chitin. ChbG is essential for growth on the acetylated chitooligosaccharides chitobiose and chitotriose but is dispensable for growth on cellobiose and chitosan dimer, the deacetylated form of chitobiose. Deacetylation of chitobiose-6-P and chitotriose-6-P is necessary for both the activation of the chb promoter by the regulatory protein ChbR and the hydrolysis of phosphorylated beta-glucosides by the phospho-beta-glucosidase ChbF. Catalyzes the removal of only one acetyl group from chitobiose-6-P to yield monoacetylchitobiose-6-P, the inducer of ChbR and the substrate of ChbF. The protein is Chitooligosaccharide deacetylase of Shigella flexneri serotype 5b (strain 8401).